Reading from the N-terminus, the 401-residue chain is UPF0283 membrane protein SO_1811 (401 aa).

The tract at residues 1-22 is disordered; the sequence is MSVELLPHSTEPHANGADKSVS. 3 consecutive transmembrane segments (helical) span residues 99–119, 129–149, and 239–259; these read LARL…VLGL, LFSF…VGVI, and ESAV…IILW.

Belongs to the UPF0283 family.

It is found in the cell inner membrane. This Shewanella oneidensis (strain ATCC 700550 / JCM 31522 / CIP 106686 / LMG 19005 / NCIMB 14063 / MR-1) protein is UPF0283 membrane protein SO_1811.